A 522-amino-acid polypeptide reads, in one-letter code: Hydroxymethylglutaryl-CoA synthase, cytoplasmic (522 aa).

Residues Asp-43 and Ala-44 each contribute to the (3S)-3-hydroxy-3-methylglutaryl-CoA site. The active-site Proton donor/acceptor is Glu-95. Cys-129, Asn-167, Thr-171, Ser-221, His-264, Lys-273, Asn-344, and Ser-378 together coordinate (3S)-3-hydroxy-3-methylglutaryl-CoA. Cys-129 (acyl-thioester intermediate) is an active-site residue. His-264 (proton donor/acceptor) is an active-site residue.

The protein belongs to the thiolase-like superfamily. HMG-CoA synthase family. Homodimer.

It localises to the cytoplasm. The catalysed reaction is acetoacetyl-CoA + acetyl-CoA + H2O = (3S)-3-hydroxy-3-methylglutaryl-CoA + CoA + H(+). The protein operates within metabolic intermediate biosynthesis; (R)-mevalonate biosynthesis; (R)-mevalonate from acetyl-CoA: step 2/3. Its function is as follows. Catalyzes the condensation of acetyl-CoA with acetoacetyl-CoA to form HMG-CoA, which is converted by HMG-CoA reductase (HMGCR) into mevalonate, a precursor for cholesterol synthesis. The chain is Hydroxymethylglutaryl-CoA synthase, cytoplasmic (HMGCS1) from Gallus gallus (Chicken).